The chain runs to 233 residues: Pyridoxine 5'-phosphate synthase (233 aa).

Asn6 is a 3-amino-2-oxopropyl phosphate binding site. 8–9 (DH) contacts 1-deoxy-D-xylulose 5-phosphate. Residue Arg17 coordinates 3-amino-2-oxopropyl phosphate. Catalysis depends on His42, which acts as the Proton acceptor. Residues Arg44 and His49 each coordinate 1-deoxy-D-xylulose 5-phosphate. The active-site Proton acceptor is Glu69. 1-deoxy-D-xylulose 5-phosphate is bound at residue Thr99. The active-site Proton donor is His186. 3-amino-2-oxopropyl phosphate-binding positions include Gly187 and 208 to 209 (GH).

This sequence belongs to the PNP synthase family. Homooctamer; tetramer of dimers.

It localises to the cytoplasm. The catalysed reaction is 3-amino-2-oxopropyl phosphate + 1-deoxy-D-xylulose 5-phosphate = pyridoxine 5'-phosphate + phosphate + 2 H2O + H(+). It participates in cofactor biosynthesis; pyridoxine 5'-phosphate biosynthesis; pyridoxine 5'-phosphate from D-erythrose 4-phosphate: step 5/5. In terms of biological role, catalyzes the complicated ring closure reaction between the two acyclic compounds 1-deoxy-D-xylulose-5-phosphate (DXP) and 3-amino-2-oxopropyl phosphate (1-amino-acetone-3-phosphate or AAP) to form pyridoxine 5'-phosphate (PNP) and inorganic phosphate. This Anaplasma phagocytophilum (strain HZ) protein is Pyridoxine 5'-phosphate synthase.